We begin with the raw amino-acid sequence, 433 residues long: Methylenetetrahydrofolate--tRNA-(uracil-5-)-methyltransferase TrmFO (433 aa).

Residue 7-12 (GGGLAG) coordinates FAD.

This sequence belongs to the MnmG family. TrmFO subfamily. Requires FAD as cofactor.

The protein localises to the cytoplasm. The enzyme catalyses uridine(54) in tRNA + (6R)-5,10-methylene-5,6,7,8-tetrahydrofolate + NADH + H(+) = 5-methyluridine(54) in tRNA + (6S)-5,6,7,8-tetrahydrofolate + NAD(+). It carries out the reaction uridine(54) in tRNA + (6R)-5,10-methylene-5,6,7,8-tetrahydrofolate + NADPH + H(+) = 5-methyluridine(54) in tRNA + (6S)-5,6,7,8-tetrahydrofolate + NADP(+). In terms of biological role, catalyzes the folate-dependent formation of 5-methyl-uridine at position 54 (M-5-U54) in all tRNAs. This Natranaerobius thermophilus (strain ATCC BAA-1301 / DSM 18059 / JW/NM-WN-LF) protein is Methylenetetrahydrofolate--tRNA-(uracil-5-)-methyltransferase TrmFO.